A 60-amino-acid polypeptide reads, in one-letter code: MAKKLEITLTRSVIGRPQDQRATVEALGLKKLNSTVVKEETPAILGMINKVSHLVTVKEA.

The protein belongs to the universal ribosomal protein uL30 family. As to quaternary structure, part of the 50S ribosomal subunit.

This Bacillus anthracis (strain A0248) protein is Large ribosomal subunit protein uL30.